We begin with the raw amino-acid sequence, 105 residues long: ATPase inhibitor A, mitochondrial (105 aa).

The interval 17–52 (MSSDQLGELGTGAGKGGGGGGSVRAAGGSFGRREAA) is disordered. Residues 22 to 51 (LGELGTGAGKGGGGGGSVRAAGGSFGRREA) are N-terminal inhibitory region. Positions 25–38 (LGTGAGKGGGGGGS) are enriched in gly residues. The stretch at 58–105 (FRQKEREQLAALKNHHEEEIDHHKKEIERLQREIDRHKGKIRKLKHDD) forms a coiled coil. An antiparallel alpha-helical coiled coil region region spans residues 73–105 (HEEEIDHHKKEIERLQREIDRHKGKIRKLKHDD).

Belongs to the ATPase inhibitor family. As to quaternary structure, homodimer; represents the active form and is present at a pH value below 6.5. Homotetramer; represents the inactive form and is present at a pH value above 7.0.

The protein localises to the mitochondrion. Its function is as follows. Endogenous F(1)F(o)-ATPase inhibitor limiting ATP depletion when the mitochondrial membrane potential falls below a threshold and the F(1)F(o)-ATP synthase starts hydrolyzing ATP to pump protons out of the mitochondrial matrix. Required to avoid the consumption of cellular ATP when the F(1)F(o)-ATP synthase enzyme acts as an ATP hydrolase. Indirectly acts as a regulator of heme synthesis in erythroid tissues: regulates heme synthesis by modulating the mitochondrial pH and redox potential, allowing fech to efficiently catalyze the incorporation of iron into protoporphyrin IX to produce heme. This is ATPase inhibitor A, mitochondrial from Danio rerio (Zebrafish).